The chain runs to 85 residues: MSFRKVEKKPTEMGRNMTHEKSDSDSDNEGAPMTVGGYTEFVARSDSDWDEPVYSGKARSNYNLTGTAKGTGPINSFSRKHFPNY.

Residues M1–S24 are compositionally biased toward basic and acidic residues. Disordered stretches follow at residues M1–V35 and S55–Y85. Positions A58–F77 are enriched in polar residues.

In terms of tissue distribution, expressed predominantly within leaves and cotyledons vasculatures. Mainly observed in fully expanded leaves, at the base of mature inflorescences, in senescing leaves and cauline leaves, and, to a lower extent, in hypocotyls and rosette leaves prior to flowering.

Plays a role in carbon allocation, including during senescence and stresses, thus impacting starch accumulation. The polypeptide is Senescence-associated and QQS-related protein (Arabidopsis thaliana (Mouse-ear cress)).